Here is a 346-residue protein sequence, read N- to C-terminus: Tetraacyldisaccharide 4'-kinase (346 aa).

54–61 (TVGGAGKT) is a binding site for ATP.

It belongs to the LpxK family.

It catalyses the reaction a lipid A disaccharide + ATP = a lipid IVA + ADP + H(+). It participates in glycolipid biosynthesis; lipid IV(A) biosynthesis; lipid IV(A) from (3R)-3-hydroxytetradecanoyl-[acyl-carrier-protein] and UDP-N-acetyl-alpha-D-glucosamine: step 6/6. In terms of biological role, transfers the gamma-phosphate of ATP to the 4'-position of a tetraacyldisaccharide 1-phosphate intermediate (termed DS-1-P) to form tetraacyldisaccharide 1,4'-bis-phosphate (lipid IVA). The protein is Tetraacyldisaccharide 4'-kinase of Rhizobium etli (strain ATCC 51251 / DSM 11541 / JCM 21823 / NBRC 15573 / CFN 42).